The primary structure comprises 59 residues: Prokaryotic ubiquitin-like protein UBact (59 aa).

The interval Met1–Gln59 is disordered. At Gln59 the chain carries Deamidated glutamine. Gln59 is covalently cross-linked (Isoglutamyl lysine isopeptide (Gln-Lys) (interchain with K-? in acceptor proteins)).

It belongs to the ubiquitin-like protein UBact family. May be modified by deamidation of its C-terminal glutamine to glutamate by the adjacently encoded deamidase. This could be a prerequisite to the subsequent conjugation, as shown in the other prokaryotic ubiquitin-like protein Pup.

May function as a protein modifier covalently attached to lysine residues of substrate proteins. This may serve to target the modified proteins for degradation by proteasomes. This is Prokaryotic ubiquitin-like protein UBact from Nitrospina gracilis (strain 3/211).